We begin with the raw amino-acid sequence, 354 residues long: Mating-type protein MAT-1 (354 aa).

Residues 60–117 constitute a DNA-binding region (alpha box); that stretch reads KAKKALNAFVGFRCYYIAIPAFKQWPMKKLSNLISLLWDRDPNKSLWSLMAKAWSNIR.

This sequence belongs to the MATALPHA1 family.

The protein localises to the nucleus. Mating type proteins are sequence specific DNA-binding proteins that act as master switches in fungal differentiation by controlling gene expression in a cell type-specific fashion. Transcriptional activator that induces the transcription of alpha-specific genes. This is Mating-type protein MAT-1 (MAT1) from Cochliobolus cymbopogonis (Curvularia cymbopogonis).